The chain runs to 1960 residues: Nuclear pore complex protein Nup98-Nup96 (1960 aa).

A run of 46 repeats spans residues 2–3, 9–10, 18–19, 30–31, 35–36, 43–44, 59–60, 73–74, 81–82, 92–93, 105–106, 117–118, 125–126, 135–136, 148–149, 160–161, 163–164, 174–175, 264–265, 266–267, 282–283, 293–294, 304–305, 309–310, 319–320, 333–334, 352–353, 358–359, 365–366, 377–378, 384–385, 387–388, 400–401, 413–414, 426–427, 428–429, 441–442, 454–455, 467–468, 493–494, 496–497, 516–517, 527–528, 546–547, 553–554, and 565–566. The interval 2 to 566 is 46 X 2 AA repeats of F-G; it reads FGGAKPSFGA…GGSLGGGGFG (565 aa). Disordered regions lie at residues 698 to 768 and 781 to 860; these read KSVE…WLHP and TGMD…AANQ. Positions 704–718 are enriched in polar residues; that stretch reads NPSSSIGSAPNTPQS. Basic and acidic residues predominate over residues 755-768; it reads ESQDNGRRESWLHP. Polar residues-rich tracts occupy residues 781-794 and 806-850; these read TGMD…STLN and RPSS…SNRS. The Peptidase S59 domain occupies 886 to 1028; the sequence is RVGYYTIPSL…GSWVFRVKHF (143 aa). Residue Ser1029 is the Nucleophile of the active site.

Belongs to the nucleoporin GLFG family. As to quaternary structure, part of the nuclear pore complex (NPC). Interacts with Rae1. Nuclear pore complex protein Nup98: Interacts with pzg and Chro. Interacts with MBD-R2; the interaction allows Nup98 recruitment to chromatin. Interacts with Trx. Interacts with Wds. Interacts with Mgtor and Cp190. Upon ecdysone stimulation, interacts with EcR, CTCF, su(Hw) and Trl. Isoform A and isoform C are autoproteolytically cleaved to yield Nup98 and Nup96 or Nup98 only, respectively. As to expression, expressed in brain.

It localises to the chromosome. Its subcellular location is the nucleus. The protein resides in the nucleoplasm. It is found in the nucleus membrane. The protein localises to the nuclear pore complex. Part of the nuclear pore complex (NPC). Required for MAD import as part of the Nup107-160 complex and required for nuclear export of Moe probably via its association with Rae1. Plays a role in nuclear mRNA export. Promotes cell antiviral response by up-regulating FoxK-dependent antiviral gene transcription. In germline stem cells, involved in their maintenance and division together with the TGF-Beta and EGFR signaling pathways. In larval lymph glands, has a role in the maintenance of hematopoiesis by regulating Pvr expression. Its function is as follows. Part of the nuclear pore complex (NPC). In the nucleoplasm, binds to transcriptionally active chromatin with a preference for regulatory regions; co-localizes with RNA polymerase II in a RNA-independent manner and before transition into transcription elongation. Plays a role in the transcriptional memory process by stabilizing enhancer-promoter loops and by mediating anchoring of chromatin to the nuclear pore complex region. During larval development, interacts with trx and MBD-R2 and regulates transcription of developmental genes including ecdysone-responsive genes such as Eip74 and E23. Functionally, part of the nuclear pore complex (NPC). In Drosophila melanogaster (Fruit fly), this protein is Nuclear pore complex protein Nup98-Nup96.